A 282-amino-acid chain; its full sequence is MSAVAAMSWWQVISLAVVQGLTEFLPVSSSGHLAVVSRVFFSDDAGASFTAVTQLGTEAAVLVYFARDIVRILRAWFDGLVVTSHRNADYRLGWYVIIGTIPICVMGLLFKDEIRSGVRNLWVVATALVVFSGVIALAEYLGRQSRHVEQLTWRDGLVVGVAQTLALVPGVSRSGSTISAGLFLGLDRELAARFGFLLAIPAVFASGLFSLPDAFHPVTEGMSATGPQLLVATLIAFVVGLAAVSWFLRFLLRHSMYWFVGYRVVVGVVVLILLATGTVAAT.

6 consecutive transmembrane segments (helical) span residues 90-110 (YRLG…GLLF), 121-141 (LWVV…AEYL), 165-185 (LALV…LFLG), 194-214 (FGFL…LPDA), 228-248 (QLLV…SWFL), and 256-276 (MYWF…LLAT).

It belongs to the UppP family.

It is found in the cell membrane. The catalysed reaction is di-trans,octa-cis-undecaprenyl diphosphate + H2O = di-trans,octa-cis-undecaprenyl phosphate + phosphate + H(+). Catalyzes the dephosphorylation of undecaprenyl diphosphate (UPP). Confers resistance to bacitracin. The polypeptide is Undecaprenyl-diphosphatase (Mycobacterium marinum (strain ATCC BAA-535 / M)).